We begin with the raw amino-acid sequence, 206 residues long: Large ribosomal subunit protein uL4 (206 aa).

The protein belongs to the universal ribosomal protein uL4 family. In terms of assembly, part of the 50S ribosomal subunit.

In terms of biological role, one of the primary rRNA binding proteins, this protein initially binds near the 5'-end of the 23S rRNA. It is important during the early stages of 50S assembly. It makes multiple contacts with different domains of the 23S rRNA in the assembled 50S subunit and ribosome. Functionally, forms part of the polypeptide exit tunnel. The protein is Large ribosomal subunit protein uL4 of Nitrobacter winogradskyi (strain ATCC 25391 / DSM 10237 / CIP 104748 / NCIMB 11846 / Nb-255).